Reading from the N-terminus, the 159-residue chain is uncharacterized protein (159 aa).

It belongs to the SufE family.

This is an uncharacterized protein from Synechocystis sp. (strain ATCC 27184 / PCC 6803 / Kazusa).